The primary structure comprises 684 residues: Signal peptide peptidase-like 2C (684 aa).

The signal sequence occupies residues 1-21 (MACLGFLLPVGFLLLISTVAG). Over 22–186 (GKYGVAHVVS…APPEPIIDYN (165 aa)) the chain is Lumenal. A PA domain is found at 83–163 (SPSQRPLRQT…HYADMLDILS (81 aa)). An N-linked (GlcNAc...) asparagine glycan is attached at asparagine 100. A helical transmembrane segment spans residues 187–207 (MLVIFILAVGTVAAGGYWAGL). The Cytoplasmic portion of the chain corresponds to 208–253 (TEANRLQRRRARRGGGSGGHHQLQEAAAAEGAQKEDNEDIPVDFTP). The disordered stretch occupies residues 216 to 242 (RRARRGGGSGGHHQLQEAAAAEGAQKE). A compositionally biased stretch (low complexity) spans 227-238 (HHQLQEAAAAEG). Residues 254–274 (AMTGVVVTLSCSLMLLLYFFY) form a helical membrane-spanning segment. The Lumenal segment spans residues 275-276 (DH). Residues 277–297 (FVYVTIGIFGLGAGIGLYSCL) form a helical membrane-spanning segment. Residues 298–319 (SPLVCRLSLRQYQRPPHSLWAS) lie on the Cytoplasmic side of the membrane. The helical transmembrane segment at 320–340 (LPLPLLLLASLCATVIIFWVA) threads the bilayer. Over 341-346 (YRNEDR) the chain is Lumenal. A helical transmembrane segment spans residues 347–365 (WAWLLQDTLGISYCLFVLH). Residues 366 to 376 (RVRLPTLKNCS) lie on the Cytoplasmic side of the membrane. A helical membrane pass occupies residues 377-397 (SFLLALLAFDVFFVFVTPFFT). Residue aspartate 386 is part of the active site. Topologically, residues 398–439 (KTGESIMAQVALGPAESSSHERLPMVLKVPRLRVSALTLCSQ) are lumenal. A helical transmembrane segment spans residues 440 to 460 (PFSILGFGDIVVPGFLVAYCC). Residue aspartate 448 is part of the active site. Over 461 to 472 (RFDVQVCSRQIY) the chain is Cytoplasmic. Residues 473-493 (FVACTVAYAVGLLVTFMAMVL) form a helical membrane-spanning segment. The Lumenal segment spans residues 494 to 495 (MQ). The chain crosses the membrane as a helical span at residues 496–516 (MGQPALLYLVSSTLLTSLAVA). Positions 499-501 (PAL) match the PAL motif. Residues 517 to 684 (ACRQELSLFW…RKSMSTQAPL (168 aa)) are Cytoplasmic-facing. Residues 548-614 (KQEGAADAHT…SDAHLDPNEL (67 aa)) are disordered. Over residues 582-592 (EIVTISENEAT) the composition is skewed to polar residues. Positions 594 to 611 (PEDRSDSSEGWSDAHLDP) are enriched in basic and acidic residues.

The protein belongs to the peptidase A22B family. In terms of assembly, interacts (via active sites) with FREY; the interaction stabilizes FREY1 protein and inhibits SPPL2C proteolytic activity. Glycosylated. As to expression, highly expressed in testis where it is primarily localised in spermatids (at protein level).

The protein resides in the endoplasmic reticulum membrane. Its function is as follows. Sperm-specific intramembrane-cleaving aspartic protease (I-CLiP) that cleaves distinct tail-anchored proteins and SNARE proteins. In elongated spermatids, modulates intracellular Ca(2+) homeostasis by controlling PLN abundance through proteolytic cleavage. During spermatogenesis, processes SNARE proteins and impacts vesicular trafficking which supports compartmental reorganization in maturating spermatids and may play a role in formation of the acrosome. Functionally, in round spermatids, acts as a scaffold protein supporting FREY1 in IZUMO1 recruitment at the endoplasmic reticulum membrane and coordination of IZUMO1 complex assembly. Stabilizes FREY1 at the endoplasmic reticulum membrane through interaction. May recruit IZUMO1 interaction partners. This Homo sapiens (Human) protein is Signal peptide peptidase-like 2C.